The sequence spans 550 residues: Hydroxylamine reductase (550 aa).

Cys-3, Cys-6, Cys-18, and Cys-25 together coordinate [2Fe-2S] cluster. His-249, Glu-273, Cys-317, Cys-405, Cys-433, Cys-458, Glu-492, and Lys-494 together coordinate hybrid [4Fe-2O-2S] cluster. Cys-405 bears the Cysteine persulfide mark.

This sequence belongs to the HCP family. The cofactor is [2Fe-2S] cluster. Hybrid [4Fe-2O-2S] cluster serves as cofactor.

The protein localises to the cytoplasm. It carries out the reaction A + NH4(+) + H2O = hydroxylamine + AH2 + H(+). In terms of biological role, catalyzes the reduction of hydroxylamine to form NH(3) and H(2)O. This is Hydroxylamine reductase from Escherichia coli O7:K1 (strain IAI39 / ExPEC).